The sequence spans 457 residues: Argininosuccinate lyase (457 aa).

Belongs to the lyase 1 family. Argininosuccinate lyase subfamily.

The protein localises to the cytoplasm. It catalyses the reaction 2-(N(omega)-L-arginino)succinate = fumarate + L-arginine. Its pathway is amino-acid biosynthesis; L-arginine biosynthesis; L-arginine from L-ornithine and carbamoyl phosphate: step 3/3. This chain is Argininosuccinate lyase, found in Haemophilus influenzae (strain PittGG).